A 292-amino-acid chain; its full sequence is uncharacterized protein (292 aa).

Residues glutamate 62–asparagine 81 form a disordered region.

This is an uncharacterized protein from Homo sapiens (Human).